The primary structure comprises 371 residues: Enoyl-[acyl-carrier-protein] reductase [NADH] 2, chloroplastic (371 aa).

The transit peptide at 1 to 67 (MGASVTTGLQ…SLNHKRFAVR (67 aa)) directs the protein to the chloroplast. NAD(+) contacts are provided by residues G87, Y94, 151–152 (DA), 198–199 (SL), and L248. Residues Y250 and Y260 each act as proton acceptor in the active site. NAD(+) is bound by residues K268 and 298–302 (LGSRA).

The protein belongs to the short-chain dehydrogenases/reductases (SDR) family. FabI subfamily. In terms of assembly, homotetramer.

The protein localises to the plastid. The protein resides in the chloroplast. The catalysed reaction is a 2,3-saturated acyl-[ACP] + NAD(+) = a (2E)-enoyl-[ACP] + NADH + H(+). It participates in lipid metabolism; fatty acid biosynthesis. Functionally, catalyzes the NAD-dependent reduction of a carbon-carbon double bond in an enoyl moiety that is covalently linked to an acyl carrier protein (ACP). Catalyzes the last reduction step in the de novo synthesis cycle of fatty acids. Involved in the elongation cycle of fatty acids which are used in lipid metabolism. Required for normal plant growth. The polypeptide is Enoyl-[acyl-carrier-protein] reductase [NADH] 2, chloroplastic (Oryza sativa subsp. japonica (Rice)).